Here is a 101-residue protein sequence, read N- to C-terminus: Small ribosomal subunit protein uS14 (101 aa).

It belongs to the universal ribosomal protein uS14 family. In terms of assembly, part of the 30S ribosomal subunit. Contacts proteins S3 and S10.

Its function is as follows. Binds 16S rRNA, required for the assembly of 30S particles and may also be responsible for determining the conformation of the 16S rRNA at the A site. The protein is Small ribosomal subunit protein uS14 of Ehrlichia chaffeensis (strain ATCC CRL-10679 / Arkansas).